The primary structure comprises 183 residues: Somatotropin (183 aa).

H19 is a binding site for Zn(2+). Residues 38 to 67 are disordered; it reads EEQRHSHKSSPSAFCQSETIPAPTGKEDAQ. A compositionally biased stretch (polar residues) spans 46-56; sequence SSPSAFCQSET. C52 and C156 form a disulfide bridge. E165 serves as a coordination point for Zn(2+). C173 and C181 are joined by a disulfide.

The protein belongs to the somatotropin/prolactin family.

It localises to the secreted. Its function is as follows. Growth hormone plays an important role in growth control and is involved in the regulation of several anabolic processes. Implicated as an osmoregulatory substance important for seawater adaptation. In Prionace glauca (Blue shark), this protein is Somatotropin (gh).